Consider the following 647-residue polypeptide: Microtubule-associated protein 9 (647 aa).

Ser2 carries the N-acetylserine modification. A Phosphotyrosine modification is found at Tyr12. 6 disordered regions span residues 127–323, 344–421, 491–514, 530–553, 580–600, and 613–647; these read KSFS…ELIM, SATA…PDRA, KRLE…EALQ, KNRK…AEKK, NEKR…KQAI, and QERI…AKVF. The segment covering 133–145 has biased composition (basic and acidic residues); the sequence is QNKDEEFEKDKIK. Over residues 155-166 the composition is skewed to polar residues; it reads IKSTSSAENNSL. Basic residues predominate over residues 174-186; it reads PSPRPRSMLKKKS. Residues 184–210 adopt a coiled-coil conformation; it reads KKSHMEEKDGLEDKETALSEELELHSA. The span at 187 to 200 shows a compositional bias: basic and acidic residues; sequence HMEEKDGLEDKETA. Composition is skewed to polar residues over residues 210-219 and 239-249; these read APSSLPTPNG and CLTSLASSSLK. Over residues 268 to 287 the composition is skewed to basic and acidic residues; that stretch reads DPNEEITENHNSLKSDENKE. The stretch at 298–328 forms a coiled coil; sequence AVEKSKESQVTADDLEEEKAKAELIMDDDRT. Residues 365–374 show a composition bias toward low complexity; the sequence is NNRASSASAR. Positions 443–628 form a coiled coil; it reads MHRIKRIESE…KQKKRHSFLE (186 aa).

As to quaternary structure, binds to purified microtubules via its C-terminus.

The protein localises to the cytoplasm. Its subcellular location is the cytoskeleton. It is found in the spindle. Its function is as follows. Involved in organization of the bipolar mitotic spindle. Required for bipolar spindle assembly, mitosis progression and cytokinesis. May act by stabilizing interphase microtubules. In Homo sapiens (Human), this protein is Microtubule-associated protein 9 (MAP9).